We begin with the raw amino-acid sequence, 397 residues long: MFCCLGYEWLSGGCKTWHSAWVINTLADHHHRGTDFGGSPWLRIIIAFPRSYKVVLTLWTVYLWLSFLKTIFQSENGHDVSTDVQQRARRSNRRRQEGLRSICMHTKKRVSSFPGNKIGLKDVITLRRHVETKGRAKIRKMKVTTKINHHDKINGKRKTAKKQKLSVKECEHAEKERQVSEAEENGKLDMKEIHTYMKMFQRAQELRRRAEDYHKCKIPPSARKALCNWVRMAAAEHRHSSGLPYWPYLTAETLKNRMGHQPPPPTQQHSITDNSLSLKTPPECLLTPLPPSADDNLKTPPECLLTPLPPSAPPSADDNLKTPPLATQEAEAEKPPKPKRWRAAEMESPPEPKRRRAAEVESPPEPKRRRAAEVEPSSPEPKRRRLSKLRTGHCTQA.

Residues Asn-256–Ala-397 form a disordered region. Residues Gln-267 to Ser-277 show a composition bias toward polar residues. Residues Leu-278–Thr-287 show a composition bias toward low complexity. The span at Lys-382–Thr-391 shows a compositional bias: basic residues.

The protein belongs to the NPIP family.

It is found in the nucleus. The protein is Nuclear pore complex-interacting protein family member B2 of Homo sapiens (Human).